The primary structure comprises 85 residues: Small ribosomal subunit protein uS17 (85 aa).

It belongs to the universal ribosomal protein uS17 family. Part of the 30S ribosomal subunit.

Its function is as follows. One of the primary rRNA binding proteins, it binds specifically to the 5'-end of 16S ribosomal RNA. In Aggregatibacter actinomycetemcomitans (Actinobacillus actinomycetemcomitans), this protein is Small ribosomal subunit protein uS17.